A 304-amino-acid chain; its full sequence is Meiotically up-regulated gene 86 protein (304 aa).

A compositionally biased stretch (low complexity) spans 1-12 (MSSNPSRSNSRS). Residues 1 to 23 (MSSNPSRSNSRSKNGDLESGLKF) are disordered. A run of 6 helical transmembrane segments spans residues 93–113 (PAPF…LFNV), 123–143 (MVTA…SMWE), 150–170 (FGGA…SIFI), 188–208 (AIGL…LCTV), 212–232 (LAFF…ACAF), and 247–267 (VGGA…MAGL).

It belongs to the acetate uptake transporter (AceTr) (TC 2.A.96) family.

It is found in the endoplasmic reticulum membrane. Its subcellular location is the golgi apparatus. The protein resides in the golgi stack membrane. It localises to the vacuole membrane. Its function is as follows. Has a role in meiosis. The sequence is that of Meiotically up-regulated gene 86 protein (mug86) from Schizosaccharomyces pombe (strain 972 / ATCC 24843) (Fission yeast).